Consider the following 758-residue polypeptide: 3-isopropylmalate dehydratase (758 aa).

[4Fe-4S] cluster contacts are provided by Cys359, Cys420, and Cys423. 2 positions are modified to phosphoserine: Ser486 and Ser488.

Belongs to the aconitase/IPM isomerase family. [4Fe-4S] cluster serves as cofactor.

It carries out the reaction (2R,3S)-3-isopropylmalate = (2S)-2-isopropylmalate. It participates in amino-acid biosynthesis; L-leucine biosynthesis; L-leucine from 3-methyl-2-oxobutanoate: step 2/4. Its function is as follows. Catalyzes the isomerization between 2-isopropylmalate and 3-isopropylmalate, via the formation of 2-isopropylmaleate. This is 3-isopropylmalate dehydratase (leu2) from Schizosaccharomyces pombe (strain 972 / ATCC 24843) (Fission yeast).